The sequence spans 355 residues: Zinc transporter ZIP13 homolog (355 aa).

Asn-4 is a glycosylation site (N-linked (GlcNAc...) asparagine). Helical transmembrane passes span 37–57, 79–99, and 118–138; these read VFSLLGSVVIGLSGIFPLIII, VLLSFAVGGLLGDVFLHLLPE, and LWVLSGILIFTIVEKIFSGYA. Asn-218 carries N-linked (GlcNAc...) asparagine glycosylation. Transmembrane regions (helical) follow at residues 273–293 and 301–321; these read LLTAGAGLLGALVAIGGSGVT and SWIMPFTAGGFLHIALVTVLP.

The protein belongs to the ZIP transporter (TC 2.A.5) family. KE4/Catsup subfamily.

The protein resides in the basolateral cell membrane. The protein localises to the golgi apparatus membrane. Its function is as follows. Involved in zinc transport and homeostasis. The chain is Zinc transporter ZIP13 homolog (Zip99C) from Drosophila melanogaster (Fruit fly).